The sequence spans 442 residues: UDP-N-acetylmuramate--L-alanine ligase (442 aa).

109–115 (GAHGKTS) serves as a coordination point for ATP.

This sequence belongs to the MurCDEF family.

The protein resides in the cytoplasm. It catalyses the reaction UDP-N-acetyl-alpha-D-muramate + L-alanine + ATP = UDP-N-acetyl-alpha-D-muramoyl-L-alanine + ADP + phosphate + H(+). It functions in the pathway cell wall biogenesis; peptidoglycan biosynthesis. In terms of biological role, cell wall formation. In Streptococcus pyogenes serotype M18 (strain MGAS8232), this protein is UDP-N-acetylmuramate--L-alanine ligase.